A 526-amino-acid chain; its full sequence is Vang-like protein 2 (526 aa).

The disordered stretch occupies residues M1–E95. Residues M1 to G109 are Cytoplasmic-facing. The span at S15–K33 shows a compositional bias: basic residues. 2 stretches are compositionally biased toward basic and acidic residues: residues S34 to K43 and E58 to N68. The span at G70–S83 shows a compositional bias: low complexity. Positions V84 to E95 are enriched in basic and acidic residues. Residues P110 to L130 form a helical membrane-spanning segment. The Extracellular segment spans residues P131–G148. The chain crosses the membrane as a helical span at residues L149–L169. Residues R170–R178 are Cytoplasmic-facing. Residues F179–L199 form a helical membrane-spanning segment. Topologically, residues F200–G215 are extracellular. A helical transmembrane segment spans residues I216 to V236. Over L237–V526 the chain is Cytoplasmic. A PDZ-binding motif is present at residues E523–V526.

Belongs to the Vang family. In terms of assembly, interacts with the PDZ domain of dvl2/dsh. In terms of tissue distribution, ubiquitously expressed at the 4-cell stage. In early somitogenesis, becomes more abundant in anterior neural tissue where expression is seen in the neural tube but not in the notochord.

Its subcellular location is the cell membrane. Functionally, plays a role in non-canonical Wnt/planar cell polarity (PCP) signaling to regulate convergent extension cell movements during gastrulation. Acts together with scrib and prickle1 and localizes prickle1 and dvl2/dsh to the plasma membrane. Has an overlapping role with kny during both convergent extension and eye development. In the eye, involved in establishing proper alignment of the anterior neural plate and midline cells expressing shha and shhb/twhh. Has indirect effects on a number of other developmental processes including notochord shape formation, neural progenitor cell morphogenesis, segregation of somites and adaxial cell development. Together with prickle1, required for the posterior (caudal) movement of branchiomotor neurons in the hindbrain independently of, and a few hours after, convergent extension. May be required for cell surface localization of fzd3 and fzd6 in the inner ear. In Danio rerio (Zebrafish), this protein is Vang-like protein 2.